The sequence spans 181 residues: Large ribosomal subunit protein uL5 (181 aa).

The protein belongs to the universal ribosomal protein uL5 family. In terms of assembly, part of the 50S ribosomal subunit; part of the 5S rRNA/L5/L18/L25 subcomplex. Contacts the 5S rRNA and the P site tRNA. Forms a bridge to the 30S subunit in the 70S ribosome.

This is one of the proteins that bind and probably mediate the attachment of the 5S RNA into the large ribosomal subunit, where it forms part of the central protuberance. In the 70S ribosome it contacts protein S13 of the 30S subunit (bridge B1b), connecting the 2 subunits; this bridge is implicated in subunit movement. Contacts the P site tRNA; the 5S rRNA and some of its associated proteins might help stabilize positioning of ribosome-bound tRNAs. This chain is Large ribosomal subunit protein uL5, found in Helicobacter pylori (strain HPAG1).